Consider the following 138-residue polypeptide: Transcription antitermination protein NusB (138 aa).

The protein belongs to the NusB family.

Its function is as follows. Involved in transcription antitermination. Required for transcription of ribosomal RNA (rRNA) genes. Binds specifically to the boxA antiterminator sequence of the ribosomal RNA (rrn) operons. The chain is Transcription antitermination protein NusB from Yersinia enterocolitica serotype O:8 / biotype 1B (strain NCTC 13174 / 8081).